The sequence spans 93 residues: Large ribosomal subunit protein bL27 (93 aa).

Positions 1 to 8 (MIMDLQFF) are excised as a propeptide. The tract at residues 8–29 (FSHHKGGGSTANGRNSAGRRLG) is disordered.

The protein belongs to the bacterial ribosomal protein bL27 family. The N-terminus is cleaved by ribosomal processing cysteine protease Prp.

This chain is Large ribosomal subunit protein bL27, found in Limosilactobacillus fermentum (strain NBRC 3956 / LMG 18251) (Lactobacillus fermentum).